The primary structure comprises 262 residues: Acyl-[acyl-carrier-protein]--UDP-N-acetylglucosamine O-acyltransferase (262 aa).

The protein belongs to the transferase hexapeptide repeat family. LpxA subfamily. Homotrimer.

Its subcellular location is the cytoplasm. The enzyme catalyses a (3R)-hydroxyacyl-[ACP] + UDP-N-acetyl-alpha-D-glucosamine = a UDP-3-O-[(3R)-3-hydroxyacyl]-N-acetyl-alpha-D-glucosamine + holo-[ACP]. Its pathway is glycolipid biosynthesis; lipid IV(A) biosynthesis; lipid IV(A) from (3R)-3-hydroxytetradecanoyl-[acyl-carrier-protein] and UDP-N-acetyl-alpha-D-glucosamine: step 1/6. Its function is as follows. Involved in the biosynthesis of lipid A, a phosphorylated glycolipid that anchors the lipopolysaccharide to the outer membrane of the cell. This is Acyl-[acyl-carrier-protein]--UDP-N-acetylglucosamine O-acyltransferase from Campylobacter curvus (strain 525.92).